We begin with the raw amino-acid sequence, 208 residues long: Small ribosomal subunit protein eS8 (208 aa).

Residues 1–37 are disordered; sequence MGISRDNWHKRRKTGGKRKPYHKKRKYEPGRPAANTK. Positions 8 to 26 are enriched in basic residues; sequence WHKRRKTGGKRKPYHKKRK.

The protein belongs to the eukaryotic ribosomal protein eS8 family. In terms of assembly, component of the small ribosomal subunit. Identified in a IGF2BP1-dependent mRNP granule complex containing untranslated mRNAs. Part of the small subunit (SSU) processome, composed of more than 70 proteins and the RNA chaperone small nucleolar RNA (snoRNA) U3.

The protein resides in the cytoplasm. It localises to the membrane. It is found in the nucleus. The protein localises to the nucleolus. Functionally, component of the small ribosomal subunit. The ribosome is a large ribonucleoprotein complex responsible for the synthesis of proteins in the cell. Part of the small subunit (SSU) processome, first precursor of the small eukaryotic ribosomal subunit. During the assembly of the SSU processome in the nucleolus, many ribosome biogenesis factors, an RNA chaperone and ribosomal proteins associate with the nascent pre-rRNA and work in concert to generate RNA folding, modifications, rearrangements and cleavage as well as targeted degradation of pre-ribosomal RNA by the RNA exosome. This Xenopus laevis (African clawed frog) protein is Small ribosomal subunit protein eS8 (rps8).